Here is a 151-residue protein sequence, read N- to C-terminus: Ribosome maturation factor RimP (151 aa).

This sequence belongs to the RimP family.

Its subcellular location is the cytoplasm. Required for maturation of 30S ribosomal subunits. The chain is Ribosome maturation factor RimP from Halorhodospira halophila (strain DSM 244 / SL1) (Ectothiorhodospira halophila (strain DSM 244 / SL1)).